The primary structure comprises 313 residues: Phosphate import ATP-binding protein PstB 2 (313 aa).

Polar residues predominate over residues 1–33 (MSDSINTEPSTDTQTNGERTVETTSPSAETTAG). A disordered region spans residues 1-40 (MSDSINTEPSTDTQTNGERTVETTSPSAETTAGESEEQVR). Positions 54-308 (LSVENLDVWY…PESQRVEDYI (255 aa)) constitute an ABC transporter domain. 86–93 (GPSGCGKS) contributes to the ATP binding site.

Belongs to the ABC transporter superfamily. Phosphate importer (TC 3.A.1.7) family. In terms of assembly, the complex is composed of two ATP-binding proteins (PstB), two transmembrane proteins (PstC and PstA) and a solute-binding protein (PstS).

It is found in the cell membrane. It carries out the reaction phosphate(out) + ATP + H2O = ADP + 2 phosphate(in) + H(+). In terms of biological role, part of the ABC transporter complex PstSACB involved in phosphate import. Responsible for energy coupling to the transport system. The sequence is that of Phosphate import ATP-binding protein PstB 2 from Haloarcula marismortui (strain ATCC 43049 / DSM 3752 / JCM 8966 / VKM B-1809) (Halobacterium marismortui).